The chain runs to 98 residues: NADH-ubiquinone oxidoreductase chain 4L (98 aa).

3 helical membrane-spanning segments follow: residues 1 to 21 (MSLV…GLLM), 29 to 49 (ALLC…LTIL), and 61 to 81 (IILL…LIMI).

The protein belongs to the complex I subunit 4L family. Core subunit of respiratory chain NADH dehydrogenase (Complex I) which is composed of 45 different subunits.

Its subcellular location is the mitochondrion inner membrane. It carries out the reaction a ubiquinone + NADH + 5 H(+)(in) = a ubiquinol + NAD(+) + 4 H(+)(out). Core subunit of the mitochondrial membrane respiratory chain NADH dehydrogenase (Complex I) which catalyzes electron transfer from NADH through the respiratory chain, using ubiquinone as an electron acceptor. Part of the enzyme membrane arm which is embedded in the lipid bilayer and involved in proton translocation. This chain is NADH-ubiquinone oxidoreductase chain 4L (MT-ND4L), found in Monodon monoceros (Narwhal).